Here is a 311-residue protein sequence, read N- to C-terminus: Heme A synthase (311 aa).

At M1 to K6 the chain is on the cytoplasmic side. Residues W7–T27 traverse the membrane as a helical segment. Over K28–R62 the chain is Extracellular. C35 and C42 form a disulfide bridge. E58 is a catalytic residue. Heme o is bound at residue H61. Residues L63–Y83 traverse the membrane as a helical segment. Over K84–T91 the chain is Cytoplasmic. The chain crosses the membrane as a helical span at residues L92–V112. Topologically, residues W113–A121 are extracellular. A helical membrane pass occupies residues I122–F142. H123 provides a ligand contact to heme o. Residues E143–M159 lie on the Cytoplasmic side of the membrane. The chain crosses the membrane as a helical span at residues K160–V180. The Extracellular portion of the chain corresponds to R181 to M211. The cysteines at positions 189 and 195 are disulfide-linked. A helical transmembrane segment spans residues G212 to I232. H213 contributes to the heme b binding site. The Cytoplasmic segment spans residues R233–W243. A helical transmembrane segment spans residues G244–F264. Residues T265–M271 are Extracellular-facing. Residues A272–I292 form a helical membrane-spanning segment. H275 lines the heme b pocket. Residues G293–K311 lie on the Cytoplasmic side of the membrane.

The protein belongs to the COX15/CtaA family. Type 1 subfamily. In terms of assembly, interacts with CtaB. Heme b is required as a cofactor.

It localises to the cell membrane. The enzyme catalyses Fe(II)-heme o + 2 A + H2O = Fe(II)-heme a + 2 AH2. The protein operates within porphyrin-containing compound metabolism; heme A biosynthesis; heme A from heme O: step 1/1. Catalyzes the conversion of heme O to heme A by two successive hydroxylations of the methyl group at C8. The first hydroxylation forms heme I, the second hydroxylation results in an unstable dihydroxymethyl group, which spontaneously dehydrates, resulting in the formyl group of heme A. In Bacillus mycoides (strain KBAB4) (Bacillus weihenstephanensis), this protein is Heme A synthase.